We begin with the raw amino-acid sequence, 228 residues long: F-box protein At5g67140 (228 aa).

Residues 4 to 51 (EAAIDRLPLDLLAYIFSLATSFTVLAQASGVCKKWRKAVNQSMARRET) enclose the F-box domain.

This Arabidopsis thaliana (Mouse-ear cress) protein is F-box protein At5g67140.